The sequence spans 867 residues: Coiled-coil domain-containing protein 80 (867 aa).

A signal peptide spans Met-1–Ala-18. 2 disordered regions span residues Arg-83–Gly-121 and Asp-282–Ala-539. Residues Gly-95–Asp-104 show a composition bias toward polar residues. Positions Pro-288 to Lys-297 are enriched in basic and acidic residues. Residues Arg-301–Pro-370 show a composition bias toward low complexity. Residues Ala-401–Glu-412 show a composition bias toward basic and acidic residues. Over residues Lys-426–Lys-435 the composition is skewed to basic residues. The span at Lys-436–Asp-451 shows a compositional bias: basic and acidic residues. Residues Lys-471 to Lys-483 are compositionally biased toward basic residues. Composition is skewed to basic and acidic residues over residues Asp-484–Gly-504 and Lys-514–Lys-523.

The protein belongs to the CCDC80 family. Binds to various extracellular matrix proteins.

Its subcellular location is the secreted. The protein localises to the extracellular space. It is found in the extracellular matrix. In terms of biological role, promotes cell adhesion and matrix assembly. This chain is Coiled-coil domain-containing protein 80 (ccdc80), found in Danio rerio (Zebrafish).